The primary structure comprises 199 residues: Large ribosomal subunit protein bL25 (199 aa).

Belongs to the bacterial ribosomal protein bL25 family. CTC subfamily. Part of the 50S ribosomal subunit; part of the 5S rRNA/L5/L18/L25 subcomplex. Contacts the 5S rRNA. Binds to the 5S rRNA independently of L5 and L18.

Its function is as follows. This is one of the proteins that binds to the 5S RNA in the ribosome where it forms part of the central protuberance. This is Large ribosomal subunit protein bL25 from Nostoc punctiforme (strain ATCC 29133 / PCC 73102).